The primary structure comprises 116 residues: DNA-binding protein Tpen_0471 (116 aa).

Belongs to the PDCD5 family.

This Thermofilum pendens (strain DSM 2475 / Hrk 5) protein is DNA-binding protein Tpen_0471.